We begin with the raw amino-acid sequence, 189 residues long: Tumor protein p53-inducible protein 11 (189 aa).

Over 1-63 the chain is Cytoplasmic; sequence MAGKQPPPLM…FAVREPLGLR (63 aa). Serine 14 carries the post-translational modification Phosphoserine. Residues 64 to 84 form a helical membrane-spanning segment; it reads VWQFLSAMLFSSVAIMALALP. Residues 85-108 are Extracellular-facing; the sequence is DQLYDAVFDGAEVTSKTPIRLYGG. A helical transmembrane segment spans residues 109–129; sequence ALLSISLIMWNALYTAEKVII. A topological domain (cytoplasmic) is located at residue arginine 130. Residues 131 to 151 form a helical membrane-spanning segment; that stretch reads WTLLTEACYFGVQSLVVTATL. Residues 152 to 155 are Extracellular-facing; the sequence is AETG. Residues 156-176 traverse the membrane as a helical segment; it reads LMSLGTVLLLASRLLFVIVSI. Residues 177–189 are Cytoplasmic-facing; the sequence is YYYYQVGRKPKKV.

The protein resides in the membrane. This chain is Tumor protein p53-inducible protein 11 (Trp53i11), found in Mus musculus (Mouse).